The chain runs to 138 residues: Cysteine desulfuration protein SufE (138 aa).

The active-site Cysteine persulfide intermediate is the Cys51.

This sequence belongs to the SufE family. Homodimer. Interacts with SufS.

Its subcellular location is the cytoplasm. It participates in cofactor biosynthesis; iron-sulfur cluster biosynthesis. Functionally, participates in cysteine desulfuration mediated by SufS. Cysteine desulfuration mobilizes sulfur from L-cysteine to yield L-alanine and constitutes an essential step in sulfur metabolism for biosynthesis of a variety of sulfur-containing biomolecules. Functions as a sulfur acceptor for SufS, by mediating the direct transfer of the sulfur atom from the S-sulfanylcysteine of SufS, an intermediate product of cysteine desulfuration process. The chain is Cysteine desulfuration protein SufE from Escherichia coli (strain K12 / MC4100 / BW2952).